A 248-amino-acid chain; its full sequence is Probable transcriptional regulatory protein PHZ_c3068 (248 aa).

Belongs to the TACO1 family.

The protein resides in the cytoplasm. The polypeptide is Probable transcriptional regulatory protein PHZ_c3068 (Phenylobacterium zucineum (strain HLK1)).